The sequence spans 110 residues: Nucleoid-associated protein KPK_4227 (110 aa).

Residues 1 to 22 form a disordered region; the sequence is MFGGKGGLGNLMKQAQQMQDKM.

Belongs to the YbaB/EbfC family. Homodimer.

The protein localises to the cytoplasm. The protein resides in the nucleoid. In terms of biological role, binds to DNA and alters its conformation. May be involved in regulation of gene expression, nucleoid organization and DNA protection. The sequence is that of Nucleoid-associated protein KPK_4227 from Klebsiella pneumoniae (strain 342).